We begin with the raw amino-acid sequence, 376 residues long: MSSEVDSNSHHAAVVIDNGSGVCKAGFSPEDTPRAVFPSIVGRPRHLNVLLDSVIGDSVIGEAAARKRGILTLKYPIEHGMVKNWDEMEMVWQHTYELLRADPMDLPALLTEAPLNPKKNREKMTEIMFEHFQVPAFYVAVQAVLSLYATGRTVGIVVDSGDGVTHTVPIYEGFALPHACVRVDLAGRDLTDYLCKLLLERGVTMGTSAEREIVREIKEKLCYVSMNYAKEMDLHGKVETYELPDGQKIVLGCERFRCPEALFQPSLLGQEVMGIHEATHHSITNCDMDLRKDMYANIVLSGGTTMFRNIEHRFLQDLTEMAPPSIRIKVNASPDRRFSVWTGGSVLASLTSFQNMWIDSLEYEEVGSAIVHRKCF.

The segment at 1-40 (MSSEVDSNSHHAAVVIDNGSGVCKAGFSPEDTPRAVFPSI) is necessary and sufficient for recruitment to the fusome and actin cones of spermatocyte cysts.

This sequence belongs to the actin family. ARP1 subfamily. As to expression, high expression in males whereas expression in females is very low. In adult males, highest levels of expression are in the testis. In adult females, expressed only in the ovaries at very low levels. In larvae, highly expressed in the imaginal disk whereas in prepupae and pupae modest levels of expression occur in the fat body.

Its subcellular location is the cytoplasm. The protein resides in the cytoskeleton. Required for optimal embryo development, particularly under heat stress conditions. Also appears to have a role in negatively regulating spermatocyte cyst development. Under heat stress conditions, required for the correct organization and migration of nuclei during early embryogenesis, and therefore possibly functions by regulating embryonic actin networks during the heat stress response. This chain is Actin-like protein 53D, found in Drosophila melanogaster (Fruit fly).